Consider the following 92-residue polypeptide: Large ribosomal subunit protein bL25 (92 aa).

The protein belongs to the bacterial ribosomal protein bL25 family. As to quaternary structure, part of the 50S ribosomal subunit; part of the 5S rRNA/L5/L18/L25 subcomplex. Contacts the 5S rRNA. Binds to the 5S rRNA independently of L5 and L18.

Functionally, this is one of the proteins that binds to the 5S RNA in the ribosome where it forms part of the central protuberance. The protein is Large ribosomal subunit protein bL25 of Vibrio campbellii (strain ATCC BAA-1116).